A 341-amino-acid chain; its full sequence is Anthranilate phosphoribosyltransferase (341 aa).

Residues glycine 84, 87-88, threonine 92, 94-97, 112-120, and serine 124 contribute to the 5-phospho-alpha-D-ribose 1-diphosphate site; these read GD, NIST, and KHGNRSVSS. Position 84 (glycine 84) interacts with anthranilate. Serine 96 contacts Mg(2+). Asparagine 115 contacts anthranilate. Anthranilate is bound at residue arginine 170. Residues aspartate 229 and glutamate 230 each contribute to the Mg(2+) site.

Belongs to the anthranilate phosphoribosyltransferase family. As to quaternary structure, homodimer. It depends on Mg(2+) as a cofactor.

The enzyme catalyses N-(5-phospho-beta-D-ribosyl)anthranilate + diphosphate = 5-phospho-alpha-D-ribose 1-diphosphate + anthranilate. It functions in the pathway amino-acid biosynthesis; L-tryptophan biosynthesis; L-tryptophan from chorismate: step 2/5. In terms of biological role, catalyzes the transfer of the phosphoribosyl group of 5-phosphorylribose-1-pyrophosphate (PRPP) to anthranilate to yield N-(5'-phosphoribosyl)-anthranilate (PRA). The chain is Anthranilate phosphoribosyltransferase from Polynucleobacter asymbioticus (strain DSM 18221 / CIP 109841 / QLW-P1DMWA-1) (Polynucleobacter necessarius subsp. asymbioticus).